The chain runs to 404 residues: Cysteine desulfurase IscS (404 aa).

Residues 75 to 76 (AT), Asn155, Gln183, and 203 to 205 (SAH) each bind pyridoxal 5'-phosphate. Residue Lys206 is modified to N6-(pyridoxal phosphate)lysine. Thr243 provides a ligand contact to pyridoxal 5'-phosphate. The Cysteine persulfide intermediate role is filled by Cys328. [2Fe-2S] cluster is bound at residue Cys328.

It belongs to the class-V pyridoxal-phosphate-dependent aminotransferase family. NifS/IscS subfamily. In terms of assembly, homodimer. Forms a heterotetramer with IscU, interacts with other sulfur acceptors. Pyridoxal 5'-phosphate is required as a cofactor.

The protein resides in the cytoplasm. The catalysed reaction is (sulfur carrier)-H + L-cysteine = (sulfur carrier)-SH + L-alanine. The protein operates within cofactor biosynthesis; iron-sulfur cluster biosynthesis. Functionally, master enzyme that delivers sulfur to a number of partners involved in Fe-S cluster assembly, tRNA modification or cofactor biosynthesis. Catalyzes the removal of elemental sulfur atoms from cysteine to produce alanine. Functions as a sulfur delivery protein for Fe-S cluster synthesis onto IscU, an Fe-S scaffold assembly protein, as well as other S acceptor proteins. This chain is Cysteine desulfurase IscS, found in Vibrio campbellii (strain ATCC BAA-1116).